A 75-amino-acid chain; its full sequence is Probable protein BRICK1-A (75 aa).

Residues Met41–Glu72 are a coiled coil.

Belongs to the BRK1 family.

The protein localises to the cytoplasm. Its subcellular location is the cytoskeleton. Involved in regulation of actin and microtubule organization. Part of a WAVE complex that activates the Arp2/3 complex. This is Probable protein BRICK1-A (brk1-a) from Xenopus laevis (African clawed frog).